The sequence spans 222 residues: Cytidylate kinase (222 aa).

ATP is bound at residue G9–T17.

Belongs to the cytidylate kinase family. Type 1 subfamily.

The protein localises to the cytoplasm. The catalysed reaction is CMP + ATP = CDP + ADP. The enzyme catalyses dCMP + ATP = dCDP + ADP. The sequence is that of Cytidylate kinase from Thermodesulfovibrio yellowstonii (strain ATCC 51303 / DSM 11347 / YP87).